Here is a 99-residue protein sequence, read N- to C-terminus: Ubiquitin-related modifier 1 homolog (99 aa).

1-thioglycine is present on glycine 99. Glycine 99 is covalently cross-linked (Glycyl lysine isopeptide (Gly-Lys) (interchain with K-? in acceptor proteins)).

It belongs to the URM1 family. Interacts with cer. In terms of processing, C-terminal thiocarboxylation occurs in 2 steps, it is first acyl-adenylated (-COAMP) via the hesA/moeB/thiF part of the MOCS3 homolog, then thiocarboxylated (-COSH) via the rhodanese domain of the MOCS3 homolog.

It localises to the cytoplasm. The protein operates within tRNA modification; 5-methoxycarbonylmethyl-2-thiouridine-tRNA biosynthesis. Functionally, acts as a sulfur carrier required for 2-thiolation of mcm(5)S(2)U at tRNA wobble positions of cytosolic tRNA(Lys), tRNA(Glu) and tRNA(Gln). Serves as sulfur donor in tRNA 2-thiolation reaction by being thiocarboxylated (-COSH) at its C-terminus by MOCS3. The sulfur is then transferred to tRNA to form 2-thiolation of mcm(5)S(2)U. Also acts as a ubiquitin-like protein (UBL) that is covalently conjugated via an isopeptide bond to lysine residues of target proteins such as Prx2/Jafrac1, Ciao1, Eip71CD and GILT1. The thiocarboxylated form serves as substrate for conjugation and oxidative stress specifically induces the formation of UBL-protein conjugates. The chain is Ubiquitin-related modifier 1 homolog from Drosophila virilis (Fruit fly).